The chain runs to 388 residues: Deoxyguanosinetriphosphate triphosphohydrolase-like protein (388 aa).

The disordered stretch occupies residues 24-44 (HSAQTRGRVHAEPPSTSRTEF). Positions 78-209 (RLTHSLEVAQ…ANLADEVAYN (132 aa)) constitute an HD domain.

The protein belongs to the dGTPase family. Type 2 subfamily.

This Ralstonia pickettii (strain 12J) protein is Deoxyguanosinetriphosphate triphosphohydrolase-like protein.